Here is a 372-residue protein sequence, read N- to C-terminus: L-selectin (372 aa).

Positions 1–28 (MVFPWRCQSAQRGSWSFLKLWIRTLLCC) are cleaved as a signal peptide. A propeptide spanning residues 29 to 38 (DLLPHHGTHC) is cleaved from the precursor. Topologically, residues 39–332 (WTYHYSERSM…FSKIKEGDYN (294 aa)) are extracellular. Residues 55 to 155 (KFCKHNYTDL…ACHKRKAALC (101 aa)) form the C-type lectin domain. 10 disulfides stabilise this stretch: Cys-57-Cys-155, Cys-128-Cys-147, Cys-128-Cys-160, Cys-160-Cys-171, Cys-165-Cys-180, Cys-182-Cys-191, Cys-197-Cys-241, Cys-227-Cys-254, Cys-259-Cys-303, and Cys-289-Cys-316. 2 N-linked (GlcNAc...) asparagine glycosylation sites follow: Asn-60 and Asn-104. Residues Glu-118, Asn-120, Glu-126, Asn-143, and Asp-144 each coordinate Ca(2+). The 37-residue stretch at 156–192 (YTASCQPESCNRHGECVETINNNTCICDPGYYGPQCQ) folds into the EGF-like domain. The N-linked (GlcNAc...) asparagine glycan is linked to Asn-177. 2 Sushi domains span residues 195 to 256 (IQCE…ICQV) and 257 to 318 (IQCM…ICQK). N-linked (GlcNAc...) asparagine glycans are attached at residues Asn-226, Asn-246, and Asn-278. A helical transmembrane segment spans residues 333 to 355 (PLFIPVAVMVTAFSGLAFIIWLA). Residues 356–372 (RRLKKGKKSQERMDDPY) lie on the Cytoplasmic side of the membrane.

This sequence belongs to the selectin/LECAM family. In terms of assembly, interaction with SELPLG/PSGL1 and PODXL2 is required for promoting recruitment and rolling of leukocytes. This interaction is dependent on the sialyl Lewis X glycan modification of SELPLG and PODXL2, and tyrosine sulfation modifications of SELPLG. Sulfation on 'Tyr-51' of SELPLG is important for L-selectin binding. In terms of processing, N-glycosylated. In terms of tissue distribution, expressed in peripheral blood mononuclear cells (PBMC), spleen and thymus.

Its subcellular location is the cell membrane. Its function is as follows. Calcium-dependent lectin that mediates cell adhesion by binding to glycoproteins on neighboring cells. Mediates the adherence of lymphocytes to endothelial cells of high endothelial venules in peripheral lymph nodes. Promotes initial tethering and rolling of leukocytes in endothelia. This Rattus norvegicus (Rat) protein is L-selectin (Sell).